Reading from the N-terminus, the 362-residue chain is S-adenosylmethionine:tRNA ribosyltransferase-isomerase (362 aa).

Belongs to the QueA family. In terms of assembly, monomer.

It is found in the cytoplasm. It catalyses the reaction 7-aminomethyl-7-carbaguanosine(34) in tRNA + S-adenosyl-L-methionine = epoxyqueuosine(34) in tRNA + adenine + L-methionine + 2 H(+). It participates in tRNA modification; tRNA-queuosine biosynthesis. Its function is as follows. Transfers and isomerizes the ribose moiety from AdoMet to the 7-aminomethyl group of 7-deazaguanine (preQ1-tRNA) to give epoxyqueuosine (oQ-tRNA). The protein is S-adenosylmethionine:tRNA ribosyltransferase-isomerase of Yersinia enterocolitica serotype O:8 / biotype 1B (strain NCTC 13174 / 8081).